The sequence spans 298 residues: Ketohexokinase (298 aa).

Beta-D-fructose contacts are provided by Asp-15, Gly-41, Asn-42, and Asn-45. Residues Arg-108, Ala-226–Gly-229, and Gly-255–Asp-258 contribute to the ATP site. Residue Asp-258 coordinates beta-D-fructose.

It belongs to the carbohydrate kinase PfkB family. As to quaternary structure, homodimer.

The enzyme catalyses beta-D-fructose + ATP = beta-D-fructose 1-phosphate + ADP + H(+). Its pathway is carbohydrate metabolism; fructose metabolism. With respect to regulation, requires potassium. Inhibition by ADP. Its function is as follows. Catalyzes the phosphorylation of the ketose sugar fructose to fructose-1-phosphate. This chain is Ketohexokinase, found in Mus musculus (Mouse).